A 165-amino-acid chain; its full sequence is Chorismate pyruvate-lyase (165 aa).

Substrate is bound by residues Met35, Arg77, Leu115, and Glu156.

It belongs to the UbiC family. Monomer.

It is found in the cytoplasm. It carries out the reaction chorismate = 4-hydroxybenzoate + pyruvate. It functions in the pathway cofactor biosynthesis; ubiquinone biosynthesis. Functionally, removes the pyruvyl group from chorismate, with concomitant aromatization of the ring, to provide 4-hydroxybenzoate (4HB) for the ubiquinone pathway. The sequence is that of Chorismate pyruvate-lyase from Enterobacter sp. (strain 638).